The following is a 623-amino-acid chain: Chaperone protein DnaK (623 aa).

Over residues 582–603 (QQQQAAEQAAQQQSGGQQASGS) the composition is skewed to low complexity. The tract at residues 582–623 (QQQQAAEQAAQQQSGGQQASGSNPGKDPNVVDADYEVVNDKK) is disordered. Acidic residues predominate over residues 614 to 623 (ADYEVVNDKK).

This sequence belongs to the heat shock protein 70 family.

Acts as a chaperone. This chain is Chaperone protein DnaK, found in Methanocella arvoryzae (strain DSM 22066 / NBRC 105507 / MRE50).